The sequence spans 539 residues: Efflux pump roqT (539 aa).

The interval 1–25 (MEKEVATDPLPQEIPSDAPDEGGSL) is disordered. The next 12 helical transmembrane spans lie at 36 to 56 (VSLT…VTII), 108 to 128 (LFLF…VGLI), 133 to 153 (IAGL…AQTV), 160 to 180 (VFTA…PPLG), 191 to 211 (WCFY…LFFF), 233 to 253 (IGSF…QWGG), 262 to 282 (RIIV…AVQI), 305 to 325 (WFAI…PIWF), 338 to 360 (VMNL…LVTI), 362 to 384 (GYYN…LLST), 395 to 415 (IGYQ…PFMV), and 502 to 522 (AFYV…ALEW).

This sequence belongs to the major facilitator superfamily. TCR/Tet family.

Its subcellular location is the membrane. Its function is as follows. Efflux pump; part of the gene cluster that mediates the biosynthesis of the mycotoxins roquefortine C and meleagrin. The protein is Efflux pump roqT of Penicillium rubens (strain ATCC 28089 / DSM 1075 / NRRL 1951 / Wisconsin 54-1255) (Penicillium chrysogenum).